We begin with the raw amino-acid sequence, 405 residues long: L-rhamnonate dehydratase (405 aa).

Residues His-33 and Arg-59 each coordinate substrate. Residues Asp-226, Glu-252, and Glu-280 each coordinate Mg(2+). Residue His-329 is the Proton acceptor of the active site. Glu-349 contributes to the substrate binding site.

The protein belongs to the mandelate racemase/muconate lactonizing enzyme family. RhamD subfamily. As to quaternary structure, homooctamer; tetramer of dimers. The cofactor is Mg(2+).

It carries out the reaction L-rhamnonate = 2-dehydro-3-deoxy-L-rhamnonate + H2O. Its function is as follows. Catalyzes the dehydration of L-rhamnonate to 2-keto-3-deoxy-L-rhamnonate (KDR). This Escherichia coli O45:K1 (strain S88 / ExPEC) protein is L-rhamnonate dehydratase.